We begin with the raw amino-acid sequence, 886 residues long: Cytosolic carboxypeptidase-like protein 5 (886 aa).

The region spanning 157 to 570 is the Peptidase M14 domain; sequence YPFSYSDCQD…AMAIAALDMA (414 aa). Zn(2+) contacts are provided by His-252 and Glu-255. Residues 344 to 353 are compositionally biased toward polar residues; the sequence is AKSPTNQQPT. Disordered stretches follow at residues 344 to 363 and 374 to 401; these read AKSP…APLS and EAHL…KTDP. His-434 serves as a coordination point for Zn(2+). The Proton donor/acceptor role is filled by Glu-516. 2 disordered regions span residues 602–737 and 783–846; these read GLTS…RNMG and TRLQ…PAFS. The span at 621–635 shows a compositional bias: polar residues; sequence PKSNNSLPVSCSENA. Positions 643–654 are enriched in low complexity; that stretch reads STGTSTGGSSSS. Over residues 655–666 the composition is skewed to polar residues; sequence QQNSPQMKNSPS. A compositionally biased stretch (low complexity) spans 714–737; that stretch reads STTSSLAPSPTLASSGPTSSRNMG. Residues 805–815 are compositionally biased toward polar residues; the sequence is SSPTSPIPQTR. A Phosphoserine modification is found at Ser-841.

It belongs to the peptidase M14 family. Requires Zn(2+) as cofactor. In terms of tissue distribution, widely expressed. Highly expressed in testis, and moderately in pituitary, brain, eye and kidney.

The protein resides in the cytoplasm. It is found in the cytosol. It localises to the nucleus. The protein localises to the cytoskeleton. Its subcellular location is the spindle. The protein resides in the midbody. It catalyses the reaction gamma-L-glutamyl-L-glutamyl-[protein] + H2O = L-glutamyl-[protein] + L-glutamate. The catalysed reaction is (L-glutamyl)(n+1)-gamma-L-glutamyl-L-glutamyl-[protein] + H2O = (L-glutamyl)(n)-gamma-L-glutamyl-L-glutamyl-[protein] + L-glutamate. The enzyme catalyses C-terminal L-alpha-aminoacyl-L-glutamyl-[tubulin] + H2O = C-terminal L-alpha-aminoacyl-[tubulin] + L-glutamate. It carries out the reaction C-terminal L-alpha-aminoacyl-L-glutamyl-L-glutamyl-[tubulin] + H2O = C-terminal L-alpha-aminoacyl-L-glutamyl-[tubulin] + L-glutamate. Metallocarboxypeptidase that mediates deglutamylation of tubulin and non-tubulin target proteins. Catalyzes the removal of polyglutamate side chains present on the gamma-carboxyl group of glutamate residues within the C-terminal tail of alpha- and beta-tubulin. Cleaves alpha- and gamma-linked polyglutamate tubulin side-chain, as well as the branching point glutamate. Also catalyzes the removal of alpha-linked glutamate residues from the carboxy-terminus of alpha-tubulin. Mediates deglutamylation of nucleotidyltransferase CGAS, leading to CGAS antiviral defense response activation. The chain is Cytosolic carboxypeptidase-like protein 5 from Mus musculus (Mouse).